Reading from the N-terminus, the 219-residue chain is MTDHRTRFLQLALGADALRFGQFTLKSGRLSPYFFNAGRFDSGTKTAQLAQCYADAIDAAGVDFDLLFGPAYKGIPLATALACAYAGRGRDLPLAFNRKEAKDHGEGGTLIGAPLAGHKVLIVDDVITAGTAIREALGIIRAAGGVPSGIVVALDRQEIASEQDRRSAAQAVATEAGIPVIAVANLSDLLAFAAENADLVDFREPLLAYRGRYGTDTTG.

Lys26 is a 5-phospho-alpha-D-ribose 1-diphosphate binding site. 34-35 is a binding site for orotate; that stretch reads FF. 5-phospho-alpha-D-ribose 1-diphosphate contacts are provided by residues 72–73, Arg98, Lys99, Lys102, His104, and 124–132; these read YK and DDVITAGTA. Orotate-binding residues include Thr128 and Arg156.

This sequence belongs to the purine/pyrimidine phosphoribosyltransferase family. PyrE subfamily. Homodimer. The cofactor is Mg(2+).

The catalysed reaction is orotidine 5'-phosphate + diphosphate = orotate + 5-phospho-alpha-D-ribose 1-diphosphate. It functions in the pathway pyrimidine metabolism; UMP biosynthesis via de novo pathway; UMP from orotate: step 1/2. Its function is as follows. Catalyzes the transfer of a ribosyl phosphate group from 5-phosphoribose 1-diphosphate to orotate, leading to the formation of orotidine monophosphate (OMP). The chain is Orotate phosphoribosyltransferase from Xanthomonas oryzae pv. oryzae (strain MAFF 311018).